Here is a 628-residue protein sequence, read N- to C-terminus: Methionine--tRNA ligase (628 aa).

The 'HIGH' region signature appears at 9-19 (YYVNDVPHLGH). 4 residues coordinate Zn(2+): cysteine 124, cysteine 127, cysteine 142, and cysteine 145. A 'KMSKS' region motif is present at residues 294–298 (KMSKS). Lysine 297 contacts ATP. The 102-residue stretch at 527 to 628 (DFAKIEIKVA…QLVQNGSLVG (102 aa)) folds into the tRNA-binding domain.

Belongs to the class-I aminoacyl-tRNA synthetase family. MetG type 2A subfamily. As to quaternary structure, homodimer. Zn(2+) is required as a cofactor.

Its subcellular location is the cytoplasm. It carries out the reaction tRNA(Met) + L-methionine + ATP = L-methionyl-tRNA(Met) + AMP + diphosphate. Is required not only for elongation of protein synthesis but also for the initiation of all mRNA translation through initiator tRNA(fMet) aminoacylation. The polypeptide is Methionine--tRNA ligase (metG) (Campylobacter jejuni subsp. jejuni serotype O:2 (strain ATCC 700819 / NCTC 11168)).